Here is a 356-residue protein sequence, read N- to C-terminus: MKKSDFHYDLPEELIAQAPLAERAASRLLVVPPTPAAFSDRQVRDLPELLQPGDLLIFNDTRVIPARLFGQKASGGRVEILIERLLGGQQARAQIGASKSPKAGSVIALDAGGQAEVLGRDGEFYLLRFDIPAPLEHWLLDAGRLPLPPYIRREPGLDDRERYQTVFAREVGAVAAPTAGLHFDEALLARLRERGVEFGHVTLHVGAGTFQPVRVDALDKHVMHTEWLNVGAALVEQVRRTRARGGRVIAVGTTVVRSLESAWRKTDDAPHGELQSFAGETQIFILPGYRIRSVDAMVTNFHLPESTLLMMVSAFAGCDRIFAAYAHAIAQRYRFFSYGDAMLLWSREWGIGNGES.

Belongs to the QueA family. Monomer.

Its subcellular location is the cytoplasm. It carries out the reaction 7-aminomethyl-7-carbaguanosine(34) in tRNA + S-adenosyl-L-methionine = epoxyqueuosine(34) in tRNA + adenine + L-methionine + 2 H(+). It functions in the pathway tRNA modification; tRNA-queuosine biosynthesis. Transfers and isomerizes the ribose moiety from AdoMet to the 7-aminomethyl group of 7-deazaguanine (preQ1-tRNA) to give epoxyqueuosine (oQ-tRNA). In Xanthomonas campestris pv. campestris (strain 8004), this protein is S-adenosylmethionine:tRNA ribosyltransferase-isomerase.